The sequence spans 210 residues: MNLITRVSVHSWSQVDLTHIIVQERVHFLHPLTHGSASQEIAQCYMPIIHGNFFVHYLQPWKAFFPTSEQKIAELTSQAMKIIRADFSVQVHFGKLWMRNALLNLRYAQIFTPKLPNINTQTEAIILGAGPSLEKGIEKIRSHRDVYTIFACDTAFPVCCTGGLMPDFFISIDPQYISYATHYVFIPFTGNCNIRHMRVSMRSTQFLFEW.

This is an uncharacterized protein from Treponema pallidum (strain Nichols).